Consider the following 259-residue polypeptide: Phosphoadenosine 5'-phosphosulfate reductase (259 aa).

The active-site Nucleophile; cysteine thiosulfonate intermediate is cysteine 244.

This sequence belongs to the PAPS reductase family. CysH subfamily.

The protein localises to the cytoplasm. The enzyme catalyses [thioredoxin]-disulfide + sulfite + adenosine 3',5'-bisphosphate + 2 H(+) = [thioredoxin]-dithiol + 3'-phosphoadenylyl sulfate. It participates in sulfur metabolism; hydrogen sulfide biosynthesis; sulfite from sulfate: step 3/3. Functionally, catalyzes the formation of sulfite from phosphoadenosine 5'-phosphosulfate (PAPS) using thioredoxin as an electron donor. In Vibrio parahaemolyticus serotype O3:K6 (strain RIMD 2210633), this protein is Phosphoadenosine 5'-phosphosulfate reductase.